The chain runs to 304 residues: Glutaminase (304 aa).

Substrate contacts are provided by serine 63, asparagine 113, glutamate 157, asparagine 164, tyrosine 188, tyrosine 240, and valine 258.

The protein belongs to the glutaminase family. Homotetramer.

It carries out the reaction L-glutamine + H2O = L-glutamate + NH4(+). In Christiangramia forsetii (strain DSM 17595 / CGMCC 1.15422 / KT0803) (Gramella forsetii), this protein is Glutaminase.